The primary structure comprises 75 residues: Sec-independent protein translocase protein TatA (75 aa).

A helical membrane pass occupies residues 1-21 (MGGFSIWHWLIVLVIVLLVFG). Residues 41-75 (KGMHDDDKPAGKLGDDSRTAEQAREAQAERDRDAR) are disordered.

Belongs to the TatA/E family. As to quaternary structure, the Tat system comprises two distinct complexes: a TatABC complex, containing multiple copies of TatA, TatB and TatC subunits, and a separate TatA complex, containing only TatA subunits. Substrates initially bind to the TatABC complex, which probably triggers association of the separate TatA complex to form the active translocon.

The protein localises to the cell inner membrane. Its function is as follows. Part of the twin-arginine translocation (Tat) system that transports large folded proteins containing a characteristic twin-arginine motif in their signal peptide across membranes. TatA could form the protein-conducting channel of the Tat system. This Xanthomonas axonopodis pv. citri (strain 306) protein is Sec-independent protein translocase protein TatA.